The primary structure comprises 202 residues: MENGFLFLDEMLHGVRWDAKYATWDNFTGKPVDGYEVNRIIGTKAVALALREAQIHAAALGYGLLLWDGYRPKSAVDCFLRWAAQPEDNLTKEKYYPNIERAELITKGYVASQSSHSRGSTIDLTLYHLDTGELVSMGSNFDFMDERSHHTAKGIGNAEAQNRRCLRKIMESSGFQSYRFEWWHYKLIDEPYPDTYFNFAVS.

2 residues coordinate Zn(2+): His-116 and Asp-123. The Proton donor/acceptor role is filled by Glu-181. Zn(2+) is bound at residue His-184.

This sequence belongs to the peptidase M15D family. Zn(2+) is required as a cofactor.

The enzyme catalyses D-alanyl-D-alanine + H2O = 2 D-alanine. Functionally, catalyzes hydrolysis of the D-alanyl-D-alanine dipeptide. This Enterococcus faecalis (strain ATCC 700802 / V583) protein is D-alanyl-D-alanine dipeptidase (vanXB).